The sequence spans 154 residues: MGLSDQEWQQVLSIWGKVESDLAGHGHQVLMRLFQDHPETLDRFEKFKGLKTPDQMKGSEDLKKHGVTVLTQLGKILKQKGNHESELKPLAQTHATKHKIPVKYLEFISEAIMKVIAEKHAADFGGDSQAAMKKALELFRNDMASKYKEFGFQG.

The 147-residue stretch at 2-148 (GLSDQEWQQV…FRNDMASKYK (147 aa)) folds into the Globin domain. His-65 lines the nitrite pocket. Position 65 (His-65) interacts with O2. His-94 contacts heme b.

It belongs to the globin family. As to quaternary structure, monomeric.

The protein resides in the cytoplasm. Its subcellular location is the sarcoplasm. It carries out the reaction Fe(III)-heme b-[protein] + nitric oxide + H2O = Fe(II)-heme b-[protein] + nitrite + 2 H(+). It catalyses the reaction H2O2 + AH2 = A + 2 H2O. In terms of biological role, monomeric heme protein which primary function is to store oxygen and facilitate its diffusion within muscle tissues. Reversibly binds oxygen through a pentacoordinated heme iron and enables its timely and efficient release as needed during periods of heightened demand. Depending on the oxidative conditions of tissues and cells, and in addition to its ability to bind oxygen, it also has a nitrite reductase activity whereby it regulates the production of bioactive nitric oxide. Under stress conditions, like hypoxia and anoxia, it also protects cells against reactive oxygen species thanks to its pseudoperoxidase activity. This chain is Myoglobin (MB), found in Cerorhinca monocerata (Rhinoceros auklet).